The chain runs to 537 residues: Glutamyl-tRNA(Gln) amidotransferase subunit A, chloroplastic/mitochondrial (537 aa).

Residues Lys116 and Ser191 each act as charge relay system in the active site. Ser215 serves as the catalytic Acyl-ester intermediate.

This sequence belongs to the amidase family. GatA subfamily. In terms of assembly, subunit of the heterotrimeric GatCAB amidotransferase (AdT) complex, composed of A, B and C subunits.

It localises to the mitochondrion. Its subcellular location is the plastid. The protein localises to the chloroplast stroma. The catalysed reaction is L-glutamyl-tRNA(Gln) + L-glutamine + ATP + H2O = L-glutaminyl-tRNA(Gln) + L-glutamate + ADP + phosphate + H(+). Functionally, allows the formation of correctly charged Gln-tRNA(Gln) through the transamidation of misacylated Glu-tRNA(Gln) in chloroplasts and mitochondria. The reaction takes place in the presence of glutamine and ATP through an activated gamma-phospho-Glu-tRNA(Gln). The chain is Glutamyl-tRNA(Gln) amidotransferase subunit A, chloroplastic/mitochondrial from Arabidopsis thaliana (Mouse-ear cress).